Reading from the N-terminus, the 200-residue chain is Large ribosomal subunit protein uL4 (200 aa).

Residues 38–68 (GRQGSKQQKTRSDVRGGGKRPWRQKGTGRAR) form a disordered region. A compositionally biased stretch (basic residues) spans 54–65 (GGKRPWRQKGTG).

The protein belongs to the universal ribosomal protein uL4 family. As to quaternary structure, part of the 50S ribosomal subunit.

In terms of biological role, one of the primary rRNA binding proteins, this protein initially binds near the 5'-end of the 23S rRNA. It is important during the early stages of 50S assembly. It makes multiple contacts with different domains of the 23S rRNA in the assembled 50S subunit and ribosome. Forms part of the polypeptide exit tunnel. This Pseudomonas fluorescens (strain Pf0-1) protein is Large ribosomal subunit protein uL4.